The sequence spans 211 residues: Small ribosomal subunit protein uS5 (211 aa).

The S5 DRBM domain maps to L51 to V114.

This sequence belongs to the universal ribosomal protein uS5 family. In terms of assembly, part of the 30S ribosomal subunit. Contacts protein S4.

In terms of biological role, with S4 and S12 plays an important role in translational accuracy. This Ignicoccus hospitalis (strain KIN4/I / DSM 18386 / JCM 14125) protein is Small ribosomal subunit protein uS5.